Consider the following 426-residue polypeptide: MSLRVQNILINSLRQYSKQILKPPGYASPEKTNHLKKFLVDKIRVSGPITVAEYMKTCVSAPLVGYYGQFSKDQKVFGAKGDFITSPELTQLFGEMIGVWVFHELANTGHKGSWQLVELGPGRAQLMNDVLNALAKFNDKDVSVHLVETSDALIDEQEKSLCIYTSKNSIDTPFIRKNKTRTGVNIYWYKSIDDIPDGFTVFIGNEFLDALPIHQFHKSGDSWNEVYVNLTKDGDLCFMKSKGENLHTKGLIPSAIRDDSSRVTWECSPESGTVVNQIVDRITTFGGFSLLVDYGHDGSRNTHSFRAYKNHKQVDTLENPGLADLTADVDFGYLSTLVKDRVVIYGPNEQREFLAQLGIEHRLRRLLQVCKDRKQQEQLIESYNMLMGDMGLKFKAWALFPKTLEFILEQRGGPAGFSAKKKTTEN.

The protein belongs to the NDUFAF7 family.

Its subcellular location is the mitochondrion. The enzyme catalyses L-arginyl-[protein] + 2 S-adenosyl-L-methionine = N(omega),N(omega)'-dimethyl-L-arginyl-[protein] + 2 S-adenosyl-L-homocysteine + 2 H(+). Functionally, arginine methyltransferase involved in the assembly or stability of mitochondrial NADH:ubiquinone oxidoreductase complex (complex I). In Caenorhabditis elegans, this protein is Protein arginine methyltransferase NDUFAF7 homolog, mitochondrial.